The primary structure comprises 134 residues: Lymphocyte antigen 6A-2/6E-1 (134 aa).

A signal peptide spans 1 to 26; sequence MDTSHTTKSCLLILLVALLCAERAQG. The 93-residue stretch at 27–119 folds into the UPAR/Ly6 domain; that stretch reads LECYQCYGVP…NGGSTWTMAG (93 aa). Disulfide bonds link Cys-29/Cys-53, Cys-32/Cys-41, Cys-46/Cys-74, Cys-78/Cys-98, and Cys-99/Cys-104. A lipid anchor (GPI-anchor amidated glycine) is attached at Gly-112. Residues 113–134 constitute a propeptide, removed in mature form; the sequence is STWTMAGVLLFSLSSVLLQTLL.

O-glycosylated. Not N-glycosylated. Post-translationally, not phosphorylated. Widely expressed.

The protein localises to the cell membrane. In terms of biological role, T-cell activation. The protein is Lymphocyte antigen 6A-2/6E-1 (Ly6a) of Mus musculus (Mouse).